The primary structure comprises 241 residues: Phosphoribosylaminoimidazole-succinocarboxamide synthase (241 aa).

This sequence belongs to the SAICAR synthetase family.

It carries out the reaction 5-amino-1-(5-phospho-D-ribosyl)imidazole-4-carboxylate + L-aspartate + ATP = (2S)-2-[5-amino-1-(5-phospho-beta-D-ribosyl)imidazole-4-carboxamido]succinate + ADP + phosphate + 2 H(+). It participates in purine metabolism; IMP biosynthesis via de novo pathway; 5-amino-1-(5-phospho-D-ribosyl)imidazole-4-carboxamide from 5-amino-1-(5-phospho-D-ribosyl)imidazole-4-carboxylate: step 1/2. The sequence is that of Phosphoribosylaminoimidazole-succinocarboxamide synthase from Latilactobacillus sakei subsp. sakei (strain 23K) (Lactobacillus sakei subsp. sakei).